The primary structure comprises 187 residues: MQKRPNPRGNPNQDKFAHIRINEQITNVASIRLVSDEGSDIVTLDEALRRAKEANLDLVEVSGDQDVHVCKLIDFGKYKFELLKKTKEAKKKQHVVTVKEIKIRPRIDNHDFEIKKRHALEFLQKGDKVKVTLRFRGREMVHSEIGMNIVNRFVEDLKEHASPEKMPVHDGKTIVVVMNPIGEKPKG.

It belongs to the IF-3 family. In terms of assembly, monomer.

The protein localises to the cytoplasm. In terms of biological role, IF-3 binds to the 30S ribosomal subunit and shifts the equilibrium between 70S ribosomes and their 50S and 30S subunits in favor of the free subunits, thus enhancing the availability of 30S subunits on which protein synthesis initiation begins. This Leptospira biflexa serovar Patoc (strain Patoc 1 / Ames) protein is Translation initiation factor IF-3.